Consider the following 387-residue polypeptide: Phosphoglycerate kinase (387 aa).

Residues 21 to 23 (DLN), R36, and 59 to 62 (HLGR) contribute to the substrate site. An N6-acetyllysine modification is found at K84. Positions 113 and 146 each coordinate substrate. ATP contacts are provided by residues K197, E314, and 340–343 (GGDT).

It belongs to the phosphoglycerate kinase family. In terms of assembly, monomer.

It is found in the cytoplasm. The enzyme catalyses (2R)-3-phosphoglycerate + ATP = (2R)-3-phospho-glyceroyl phosphate + ADP. The protein operates within carbohydrate degradation; glycolysis; pyruvate from D-glyceraldehyde 3-phosphate: step 2/5. The chain is Phosphoglycerate kinase from Escherichia coli O139:H28 (strain E24377A / ETEC).